The primary structure comprises 130 residues: Protein MGF 360-1L (130 aa).

3 helical membrane-spanning segments follow: residues F4 to C24, I75 to F95, and L109 to P129.

It belongs to the asfivirus MGF 110 family.

It is found in the host membrane. Its function is as follows. Plays a role in virus cell tropism, and may be required for efficient virus replication in macrophages. This is Protein MGF 360-1L from Ornithodoros (relapsing fever ticks).